The primary structure comprises 211 residues: MANSGLQLLGFSMAMLGWVGLIASTAIPQWQMSSYAGDNIITAQAMYKGLWMECVTQSTGMMSCKMYDSVLALPAATQATRALMIVSLVLGFLAMFVATMGMKCTRCGGDDKVKKARIAMTGGIIFIVAGLAALVACSWIGHQIVTDFYNPLTPMNIKYEFGPAIFIGWAGSALVLLGGALLSCSCPGSESKAAYRAPRSYPKSNSSKEYV.

Residues Met1–Gln7 lie on the Cytoplasmic side of the membrane. Residues Leu8–Pro28 form a helical membrane-spanning segment. Topologically, residues Gln29–Arg81 are extracellular. A helical transmembrane segment spans residues Ala82–Met102. The Cytoplasmic segment spans residues Lys103–Ala119. Residues Met120–Ile140 traverse the membrane as a helical segment. The Extracellular portion of the chain corresponds to Gly141–Glu160. Residues Phe161 to Leu181 traverse the membrane as a helical segment. At Leu182–Val211 the chain is on the cytoplasmic side. The interactions with TJP1, TJP2 and TJP3 stretch occupies residues Tyr210 to Val211.

Belongs to the claudin family. Directly interacts with TJP1/ZO-1, TJP2/ZO-2 and TJP3/ZO-3. The phosphorylated form interacts with EPCAM. Phosphorylated.

It localises to the cell membrane. The protein resides in the basolateral cell membrane. The protein localises to the cell junction. It is found in the tight junction. Its function is as follows. Plays a major role in tight junction-specific obliteration of the intercellular space. This is Claudin-7 (Cldn7) from Rattus norvegicus (Rat).